We begin with the raw amino-acid sequence, 161 residues long: Regulator of ribonuclease activity A (161 aa).

It belongs to the RraA family. Homotrimer. Binds to both RNA-binding sites in the C-terminal region of Rne and to RhlB.

The protein localises to the cytoplasm. Functionally, globally modulates RNA abundance by binding to RNase E (Rne) and regulating its endonucleolytic activity. Can modulate Rne action in a substrate-dependent manner by altering the composition of the degradosome. Modulates RNA-binding and helicase activities of the degradosome. The sequence is that of Regulator of ribonuclease activity A from Pseudoalteromonas atlantica (strain T6c / ATCC BAA-1087).